A 143-amino-acid chain; its full sequence is Nitrosuccinic acid decarboxylase npaB (143 aa).

It belongs to the carboxymuconolactone decarboxylase family. The cofactor is Mg(2+).

It participates in mycotoxin biosynthesis. Nitrosuccinic acid decarboxylase; part of the gene cluster that mediates the biosynthesis of the deadly neurotoxic nitroalkane 3-nitropropanoic acid (3-NPA) that acts as an antimetabolite of succinate and irreversibly inhibits succinate dehydrogenase and disrupts mitochondrial oxidative phosphorylation. NpaB facilitates decarboxylation of nitrosuccinic acid produced by the nitrosuccinic acid synthase npaA to yield the final product of the cluster, the lethal mycotoxin 3-NPA. The chain is Nitrosuccinic acid decarboxylase npaB from Metarhizium robertsii (strain ARSEF 23 / ATCC MYA-3075) (Metarhizium anisopliae (strain ARSEF 23)).